A 514-amino-acid polypeptide reads, in one-letter code: Membrane-bound lytic murein transglycosylase F (514 aa).

The signal sequence occupies residues 1 to 30 (MKKLKINYLFIGILTLLLAAALWPSIPWFG). The segment at 31–269 (KTENHIAAIQ…RIEEKYLGHG (239 aa)) is non-LT domain. Residues 270-514 (DDFDYVDTRS…LFTPQKKEEK (245 aa)) are LT domain. Residue Glu-314 is part of the active site.

In the N-terminal section; belongs to the bacterial solute-binding protein 3 family. It in the C-terminal section; belongs to the transglycosylase Slt family.

Its subcellular location is the cell outer membrane. The catalysed reaction is Exolytic cleavage of the (1-&gt;4)-beta-glycosidic linkage between N-acetylmuramic acid (MurNAc) and N-acetylglucosamine (GlcNAc) residues in peptidoglycan, from either the reducing or the non-reducing ends of the peptidoglycan chains, with concomitant formation of a 1,6-anhydrobond in the MurNAc residue.. Murein-degrading enzyme that degrades murein glycan strands and insoluble, high-molecular weight murein sacculi, with the concomitant formation of a 1,6-anhydromuramoyl product. Lytic transglycosylases (LTs) play an integral role in the metabolism of the peptidoglycan (PG) sacculus. Their lytic action creates space within the PG sacculus to allow for its expansion as well as for the insertion of various structures such as secretion systems and flagella. This is Membrane-bound lytic murein transglycosylase F from Salmonella paratyphi A (strain ATCC 9150 / SARB42).